Here is a 136-residue protein sequence, read N- to C-terminus: Ubiquinol-cytochrome c reductase complex assembly factor 2 (136 aa).

The N-terminal 13 residues, 1–13, are a transit peptide targeting the mitochondrion; it reads MAALRYRRFLKLC.

Interacts with UQCC1. Forms a complex, named COMB/coordinator of mitochondrial CYTB biogenesis, composed of UQCC1, UQCC2, UQCC4, UQCC5 and UQCC6; stabilizes nascent cytochrome b/MT-CYB and promotes its membrane insertion. Forms a complex, named COMA, composed of UQCC1, UQCC2 and UQCC4; activates MT-CYB translation. Forms a complex, named COMC, composed of UQCC1, UQCC2; UQCC3 and UQCC4; mediates MT-CYB hemylation and association with the first nuclear-encoded CIII subunit UQCRQ. In terms of tissue distribution, widely expressed with highest levels in brain, liver, kidney, heart, skeletal muscle, thymus, testis and pancreas (at protein level).

It localises to the mitochondrion matrix. The protein localises to the mitochondrion nucleoid. It is found in the mitochondrion. Its subcellular location is the mitochondrion intermembrane space. The protein resides in the mitochondrion inner membrane. Functionally, required for the assembly of the ubiquinol-cytochrome c reductase complex (mitochondrial respiratory chain complex III or cytochrome b-c1 complex). Plays a role in the modulation of respiratory chain activities such as oxygen consumption and ATP production and via its modulation of the respiratory chain activity can regulate skeletal muscle differentiation and insulin secretion by pancreatic beta-cells. Involved in cytochrome b translation and/or stability. The protein is Ubiquinol-cytochrome c reductase complex assembly factor 2 (Uqcc2) of Mus musculus (Mouse).